The chain runs to 273 residues: Vitamin B12-binding protein (273 aa).

Residues 1–18 (MMKTLSSLLLLFSVSLQA) form the signal peptide. Residues 23–273 (RVISLAPHAT…EHFASIEQKR (251 aa)) form the Fe/B12 periplasmic-binding domain. C183 and C263 form a disulfide bridge.

This sequence belongs to the BtuF family. As to quaternary structure, the complex is composed of two ATP-binding proteins (BtuD), two transmembrane proteins (BtuC) and a solute-binding protein (BtuF).

The protein localises to the periplasm. Part of the ABC transporter complex BtuCDF involved in vitamin B12 import. Binds vitamin B12 and delivers it to the periplasmic surface of BtuC. The sequence is that of Vitamin B12-binding protein from Vibrio vulnificus (strain CMCP6).